Here is a 412-residue protein sequence, read N- to C-terminus: 2,3-bisphosphoglycerate-independent phosphoglycerate mutase (412 aa).

The protein belongs to the BPG-independent phosphoglycerate mutase family. A-PGAM subfamily.

The catalysed reaction is (2R)-2-phosphoglycerate = (2R)-3-phosphoglycerate. The protein operates within carbohydrate degradation; glycolysis; pyruvate from D-glyceraldehyde 3-phosphate: step 3/5. In terms of biological role, catalyzes the interconversion of 2-phosphoglycerate and 3-phosphoglycerate. The protein is 2,3-bisphosphoglycerate-independent phosphoglycerate mutase (apgM) of Pyrococcus horikoshii (strain ATCC 700860 / DSM 12428 / JCM 9974 / NBRC 100139 / OT-3).